We begin with the raw amino-acid sequence, 96 residues long: uncharacterized protein (96 aa).

A compositionally biased stretch (basic and acidic residues) spans Met1 to Arg18. A disordered region spans residues Met1 to Gln96. Residues Gln28 to Thr46 show a composition bias toward polar residues. Basic and acidic residues predominate over residues Thr70–Gln96.

This is an uncharacterized protein from Caenorhabditis elegans.